The sequence spans 380 residues: Cytochrome b (380 aa).

Transmembrane regions (helical) follow at residues 33-53, 77-98, 113-133, and 178-198; these read FGSL…FLAM, WLIR…YLHI, WNVG…GYVL, and FFAF…LHLL. Histidine 83 and histidine 97 together coordinate heme b. 2 residues coordinate heme b: histidine 182 and histidine 196. Histidine 201 is an a ubiquinone binding site. The next 4 helical transmembrane spans lie at 226-246, 288-308, 320-340, and 347-367; these read YKDL…ALFS, LGGV…PFLH, ASQF…WIGG, and FIII…VLFP.

This sequence belongs to the cytochrome b family. As to quaternary structure, the cytochrome bc1 complex contains 3 respiratory subunits (MT-CYB, CYC1 and UQCRFS1), 2 core proteins (UQCRC1 and UQCRC2) and probably 6 low-molecular weight proteins. It depends on heme b as a cofactor.

It is found in the mitochondrion inner membrane. Its function is as follows. Component of the ubiquinol-cytochrome c reductase complex (complex III or cytochrome b-c1 complex) that is part of the mitochondrial respiratory chain. The b-c1 complex mediates electron transfer from ubiquinol to cytochrome c. Contributes to the generation of a proton gradient across the mitochondrial membrane that is then used for ATP synthesis. In Scomber scombrus (Atlantic mackerel), this protein is Cytochrome b (mt-cyb).